A 731-amino-acid polypeptide reads, in one-letter code: E3 ubiquitin-protein ligase COP1 (731 aa).

The tract at residues 1–40 (MSGSRQAGSGSAGTSPGSSAASSVTSASSSLSSSPSPPSV) is disordered. Positions 109–113 (GSRKR) match the Nuclear localization signal 1 motif. Residues 136–174 (CPICFDMIEEAYMTKCGHSFCYKCIHQSLEDNNRCPKCN) form an RING-type zinc finger. The short motif at 195–206 (KQKQRFEEKRFK) is the Nuclear localization signal 2 element. Residues 233–301 (LDLANVNLML…DIKRVEEMSG (69 aa)) adopt a coiled-coil conformation. Residues 235-245 (LANVNLMLELL) carry the Nuclear export signal motif. Positions 305–325 (PVSEDSTVPQFEAPSPSHSSI) are disordered. 7 WD repeats span residues 419–458 (NGSS…QDAV), 468–508 (TCNS…RSKV), 511–551 (EHEK…SVAS), 553–593 (EAKA…QPIM), 597–635 (GHRK…CLRS), 638–677 (GHIN…TLLT), and 691–729 (RKED…KVLE). The interval 643–645 (KNF) is interaction with TRIB1.

Belongs to the COP1 family. In terms of assembly, homodimer. Homodimerization is mediated by the coiled coil domain. Component of the DCX DET1-COP1 ubiquitin ligase complex at least composed of RBX1, DET1, DDB1, CUL4A and COP1. Isoform 2 does not interact with CUL4A but still binds to RBX1, suggesting that the interaction may be mediated by another cullin protein. Isoform 1 and isoform 2 interact with CUL5 but not with CUL1, CUL2 not CUL3. Interacts with bZIP transcription factors JUN, JUNB and JUND but not with FOS, ATF2 nor XBP1. Interacts with p53 (TP53). Interacts with COPS6; this interaction stabilizes RFWD2 through reducing its auto-ubiquitination and decelerating its turnover rate. Interacts with SFN; this interaction leads to SFN degradation. Isoform 4 forms heterodimers with isoform 1, preventing its association with DET1. Interacts with p53/TP53 and MTA1. Interacts with TRIB1 (via C-terminus) and TRIB2. Post-translationally, autoubiquitinated. MTA1 destabilizes it by promoting its autoubiquitination. As to expression, ubiquitously expressed at low level. Expressed at higher level in testis, placenta, skeletal muscle and heart.

The protein localises to the nucleus speckle. Its subcellular location is the cytoplasm. It catalyses the reaction S-ubiquitinyl-[E2 ubiquitin-conjugating enzyme]-L-cysteine + [acceptor protein]-L-lysine = [E2 ubiquitin-conjugating enzyme]-L-cysteine + N(6)-ubiquitinyl-[acceptor protein]-L-lysine.. The protein operates within protein modification; protein ubiquitination. TRIB1 competes with substrates for RFWD2 binding. E3 ubiquitin-protein ligase that mediates ubiquitination and subsequent proteasomal degradation of target proteins. E3 ubiquitin ligases accept ubiquitin from an E2 ubiquitin-conjugating enzyme in the form of a thioester and then directly transfers the ubiquitin to targeted substrates. Involved in JUN ubiquitination and degradation. Directly involved in p53 (TP53) ubiquitination and degradation, thereby abolishing p53-dependent transcription and apoptosis. Ubiquitinates p53 independently of MDM2 or RCHY1. Probably mediates E3 ubiquitin ligase activity by functioning as the essential RING domain subunit of larger E3 complexes. In contrast, it does not constitute the catalytic RING subunit in the DCX DET1-COP1 complex that negatively regulates JUN, the ubiquitin ligase activity being mediated by RBX1. Involved in 14-3-3 protein sigma/SFN ubiquitination and proteasomal degradation, leading to AKT activation and promotion of cell survival. Ubiquitinates MTA1 leading to its proteasomal degradation. Upon binding to TRIB1, ubiquitinates CEBPA, which lacks a canonical COP1-binding motif. This Homo sapiens (Human) protein is E3 ubiquitin-protein ligase COP1.